The following is a 236-amino-acid chain: Small ribosomal subunit protein uS2c (236 aa).

This sequence belongs to the universal ribosomal protein uS2 family.

It is found in the plastid. The protein resides in the chloroplast. The sequence is that of Small ribosomal subunit protein uS2c (rps2) from Oryza sativa (Rice).